The sequence spans 729 residues: Sodium-dependent neutral amino acid transporter B(0)AT2 (729 aa).

At 1–69 (MPKNSKVVKR…ERPAWNSKLQ (69 aa)) the chain is on the cytoplasmic side. A phosphoserine mark is found at serine 25 and serine 55. 3 helical membrane-spanning segments follow: residues 70–90 (YILAQVGFSVGLGNVWRFPYL), 98–117 (AYLLPYLILLLVIGIPLFFL), and 142–162 (GIGFASCVVCYFVALYYNVII). The Extracellular segment spans residues 163-225 (GWTLFYFSQS…SSISESGGLN (63 aa)). The N-linked (GlcNAc...) asparagine glycan is linked to asparagine 187. The next 4 helical transmembrane spans lie at 226 to 244 (WKMTGCLLAAWVMVCLAMI), 253 to 270 (IMYFSSLFPYVVLICFLI), 306 to 323 (VFFALGLGFGGVIAFSSY), and 335 to 356 (VLVSFINFFTSVLATLVVFAVL). Residues 357 to 452 (GFKANIVNEK…FIAFTEAMTH (96 aa)) are Extracellular-facing. 2 N-linked (GlcNAc...) asparagine glycosylation sites follow: asparagine 383 and asparagine 394. Helical transmembrane passes span 453–472 (FPASPFWSVMFFLMLINLGL), 496–514 (ILTVICCLLAFCIGLMFVQ), 530–550 (TLPLLIVVILENIAVSFVYGI), 571–592 (YMWKYISPLMLVTLLIASIVNM), and 620–642 (VVCFSLMVLAILPVPVVFVIRRC). Residues 643–729 (NLIDDSSGNL…DMPDMPESDL (87 aa)) are Cytoplasmic-facing. A phosphoserine mark is found at serine 687, serine 699, and serine 701.

The protein belongs to the sodium:neurotransmitter symporter (SNF) (TC 2.A.22) family. SLC6A15 subfamily. In terms of tissue distribution, widely distributed in the central nervous system, including the olfactory bulb, the hypothalamus, the cerebral cortex, the hippocampus, and the cerebellum. In addition, intense expression is found in the motor nuclei including the oculomotor nucleus, abducens nucleus, trigeminal motor nucleus, facial nucleus, hypoglossal nucleus and ventral horn of spinal cord. Intense hybridization signals are also observed in the nuclei containing monoaminergic neurons, such as locus coeruleus, the substantia nigra pars compacta, the ventral tegmental area, the dorsal raphe nucleus and the median raphe nucleus.

It localises to the membrane. It carries out the reaction L-leucine(in) + Na(+)(in) = L-leucine(out) + Na(+)(out). The catalysed reaction is L-isoleucine(in) + Na(+)(in) = L-isoleucine(out) + Na(+)(out). The enzyme catalyses L-methionine(in) + Na(+)(in) = L-methionine(out) + Na(+)(out). It catalyses the reaction L-proline(in) + Na(+)(in) = L-proline(out) + Na(+)(out). It carries out the reaction L-alanine(in) + Na(+)(in) = L-alanine(out) + Na(+)(out). The catalysed reaction is L-asparagine(in) + Na(+)(in) = L-asparagine(out) + Na(+)(out). The enzyme catalyses L-valine(in) + Na(+)(in) = L-valine(out) + Na(+)(out). It catalyses the reaction L-cysteine(in) + Na(+)(in) = L-cysteine(out) + Na(+)(out). It carries out the reaction L-glutamine(in) + Na(+)(in) = L-glutamine(out) + Na(+)(out). The catalysed reaction is L-serine(in) + Na(+)(in) = L-serine(out) + Na(+)(out). The enzyme catalyses L-threonine(in) + Na(+)(in) = L-threonine(out) + Na(+)(out). It catalyses the reaction L-pipecolate(in) + Na(+)(in) = L-pipecolate(out) + Na(+)(out). It carries out the reaction L-phenylalanine(in) + Na(+)(in) = L-phenylalanine(out) + Na(+)(out). Its function is as follows. Functions as a sodium-dependent neutral amino acid transporter. Exhibits preference for the branched-chain amino acids, particularly leucine, valine and isoleucine and methionine. Can also transport low-affinity substrates such as alanine, phenylalanine, glutamine and pipecolic acid. Mediates the saturable, pH-sensitive and electrogenic cotransport of proline and sodium ions with a stoichiometry of 1:1. May have a role as transporter for neurotransmitter precursors into neurons. In contrast to other members of the neurotransmitter transporter family, does not appear to be chloride-dependent. This Rattus norvegicus (Rat) protein is Sodium-dependent neutral amino acid transporter B(0)AT2 (Slc6a15).